The primary structure comprises 526 residues: Acid-sensing ion channel 1 (526 aa).

The Cytoplasmic portion of the chain corresponds to 1 to 49 (MELKTEEEEVGGVQPVSIQAFASSSTLHGLAHIFSYERLSLKRALWALC). Residues 50 to 66 (FLGSLAVLLCVCTERVQ) form a helical membrane-spanning segment. The Extracellular segment spans residues 67–425 (YYFCYHHVTK…ETIEQKKAYE (359 aa)). 7 disulfide bridges follow: Cys93–Cys194, Cys172–Cys179, Cys290–Cys365, Cys308–Cys361, Cys312–Cys359, Cys321–Cys343, and Cys323–Cys335. 2 N-linked (GlcNAc...) asparagine glycosylation sites follow: Asn366 and Asn393. Residues 426–456 (IAGLLGDIGGQMGLFIGASILTVLELFDYAY) traverse the membrane as a discontinuously helical segment. Residues 442–444 (GAS) carry the GAS motif; ion selectivity filter motif. The Cytoplasmic portion of the chain corresponds to 457 to 526 (EVIKHRLCRR…ARGTFEDFTC (70 aa)). Residue Ser477 is modified to Phosphoserine; by PKA. At Ser497 the chain carries Phosphoserine.

The protein belongs to the amiloride-sensitive sodium channel (TC 1.A.6) family. ASIC1 subfamily. In terms of assembly, homotrimer. Heterotrimer; with other ASIC proteins producing channel with different properties. Interacts with PICK1; regulates ASIC1 clustering in membranes. Interacts with STOM; alters heterotrimeric ASIC channels activity. In terms of processing, pH-gating could be regulated by serine proteases. Phosphorylation by PKA regulates interaction with PICK1 and subcellular localization. Phosphorylation by PKC may regulate the channel. Expressed in brain areas receiving strong excitatory corticofugal input. In hippocampus, expressed in the hilus of the dentate gyrus. In the cerebral cortex expressed in anterior and posterior cingulate cortex, sensory and motor cortices. In the sensory cortex strongest expression is detected in the whisker barrel field. In sensorimotor and cingulate cortex expression is elevated in layer III. Also expressed in basal ganglia, striatum, ventral pallidum, olfactory tubercle, and nucleus accumbens. Weakly expressed in thalamus with the exception of the habenula and the medial septal nuclei. In olfactory bulb, preferentially expressed in the glomerular layer, within glomeruli. Expressed in cerebellum in the molecular and granule cell layers. Strongly expressed in amygdala complex, particularly in the lateral and basolateral nuclei. Isoform 1 is more abundant in brain compared to isoform 2 (at protein level). Expressed in the nodose ganglion and dorsal root ganglion. Expressed in dendritic spine cells.

Its subcellular location is the cell membrane. It is found in the postsynaptic cell membrane. The protein resides in the cell projection. It localises to the dendrite. The enzyme catalyses Na(+)(in) = Na(+)(out). It carries out the reaction Ca(2+)(in) = Ca(2+)(out). The catalysed reaction is K(+)(in) = K(+)(out). It catalyses the reaction Li(+)(in) = Li(+)(out). Its activity is regulated as follows. Inhibited by the diuretic drug amiloride. The activity of the channel is sensitive to rapid decrease in osmotic pressure. In terms of biological role, forms voltage-independent, pH-gated trimeric sodium channels that act as postsynaptic excitatory receptors in the nervous system, playing a crucial role in regulating synaptic plasticity, learning, and memory. Upon extracellular pH drop this channel elicits transient, fast activating, and completely desensitizing inward currents. Displays high selectivity for sodium ions but can also permit the permeation of other cations. Regulates more or less directly intracellular calcium concentration and CaMKII phosphorylation, and thereby the density of dendritic spines. Modulates neuronal activity in the circuits underlying innate fear. Has high selectivity for sodium ions but is also potentially permeable to other cations including potassium. Could function in cochlear mechanoelectrical transduction. The protein is Acid-sensing ion channel 1 of Mus musculus (Mouse).